Consider the following 1133-residue polypeptide: Envelopment polyprotein (1133 aa).

The first 17 residues, 1-17 (MWSLLLLAALVGQGFAL), serve as a signal peptide directing secretion. At 18 to 484 (KNVFDMRIQC…PGFHGWATAA (467 aa)) the chain is on the lumenal side. 11 cysteine pairs are disulfide-bonded: Cys-27-Cys-149, Cys-61-Cys-155, Cys-107-Cys-126, Cys-131-Cys-136, Cys-173-Cys-183, Cys-208-Cys-245, Cys-232-Cys-349, Cys-374-Cys-433, Cys-378-Cys-387, Cys-403-Cys-422, and Cys-450-Cys-473. A glycan (N-linked (GlcNAc...) asparagine; by host) is linked at Asn-132. N-linked (GlcNAc...) asparagine; by host glycosylation is found at Asn-233 and Asn-345. N-linked (GlcNAc...) asparagine; by host glycosylation is present at Asn-397. A helical transmembrane segment spans residues 485–504 (LLITFCFGWVLIPACTLAIL). Topologically, residues 505-626 (LVLKFFANIL…NLFRYKSRCY (122 aa)) are cytoplasmic. The interval 514–531 (LHTSNQENRFKAILRKIK) is binding to the ribonucleoprotein. CCHC-type zinc fingers lie at residues 543–563 (CEICKYECETLKELKAHNLSC) and 568–589 (CPYCFTHCEPTETAIQAHYKVC). Binding to the ribonucleoprotein stretches follow at residues 586-603 (YKVCQATHRFREDLKKTV), 590-601 (QATHRFREDLKK), and 609-623 (GPGCYRTLNLFRYKS). The ITAM domain occupies 609-632 (GPGCYRTLNLFRYKSRCYILTMWT). The YxxL motif lies at 613–616 (YRTL). A helical transmembrane segment spans residues 627–647 (ILTMWTLLLIIESILWAASAA). The Lumenal portion of the chain corresponds to 648–1104 (EIPLVPLWTD…WVMGIINGNW (457 aa)). 8 cysteine pairs are disulfide-bonded: Cys-733-Cys-768, Cys-737-Cys-775, Cys-749-Cys-883, Cys-763-Cys-894, Cys-778-Cys-902, Cys-804-Cys-813, Cys-821-Cys-830, and Cys-861-Cys-865. Positions 755 to 775 (YEYENSWACNPPDCPGVGTGC) are fusion loop. Asn-926 carries an N-linked (GlcNAc...) asparagine; by host glycan. 5 disulfides stabilise this stretch: Cys-968-Cys-998, Cys-991-Cys-1043, Cys-1008-Cys-1013, Cys-1044-Cys-1049, and Cys-1083-Cys-1087. The chain crosses the membrane as a helical span at residues 1105–1125 (VVLIVLCVLLLFSLILLSILC). A binding to the ribonucleoprotein region spans residues 1120–1133 (LLSILCPVRKHKKS). At 1126-1133 (PVRKHKKS) the chain is on the cytoplasmic side.

Belongs to the hantavirus envelope glycoprotein family. Homodimer. Homotetramer; forms heterotetrameric Gn-Gc spikes in the pre-fusion conformation. Interacts (via C-terminus) with the nucleoprotein. Interacts with host TUFM; this interaction contributes to the virus-induced degradation of mitochondria by autophagy, which leads to degradation of host MAVS and inhibition of type I interferon (IFN) responses. Interacts with host MAP1LC3B; this interaction contributes to the virus-induced degradation of mitochondria by autophagy, which leads to degradation of host MAVS and inhibition of type I interferon (IFN) responses. In terms of assembly, homodimer. Homotetramer; forms heterotetrameric Gn-Gc spikes in the pre-fusion conformation. Homotrimer; forms homotrimer in the post-fusion conformation at acidic pH. Interacts (via C-terminus) with the nucleoprotein. Post-translationally, envelope polyprotein precursor is quickly cleaved in vivo just after synthesis, presumably by host signal peptidase.

It localises to the virion membrane. The protein resides in the host cell surface. It is found in the host Golgi apparatus membrane. The protein localises to the host endoplasmic reticulum membrane. Its subcellular location is the host mitochondrion. Its function is as follows. Forms homotetramers with glycoprotein C at the surface of the virion. Attaches the virion to host cell receptors including integrin ITGAV/ITGB3. This attachment induces virion internalization predominantly through clathrin-dependent endocytosis. Mediates the assembly and budding of infectious virus particles through its interaction with the nucleocapsid protein and the viral genome. May dysregulate normal immune and endothelial cell responses through an ITAM motif. Translocates to mitochondria, binds to host TUFM and recruits MAP1LC3B. These interactions induce mitochondrial autophagy and therefore destruction of host MAVS leading to inhibition of type I interferon (IFN) responses. Concomitant breakdown of glycoprotein N is apparently prevented by the nucleoprotein that may inhibit Gn-stimulated autophagosome-lysosome fusion. Interacts with the viral genomic RNA. Functionally, forms homotetramers with glycoprotein N at the surface of the virion. Attaches the virion to host cell receptors including integrin ITGAV/ITGB3. This attachment induces virion internalization predominantly through clathrin-dependent endocytosis. Class II fusion protein that promotes fusion of viral membrane with host endosomal membrane after endocytosis of the virion. The chain is Envelopment polyprotein (GP) from Homo sapiens (Human).